A 944-amino-acid chain; its full sequence is Putative alpha,alpha-trehalose-phosphate synthase [UDP-forming] 106 kDa subunit (944 aa).

A compositionally biased stretch (polar residues) spans 73 to 84 (TNAQSNIATPSP). 2 disordered regions span residues 73-113 (TNAQ…NSLS) and 129-166 (SKNDGTNLSLPPSRHQSPPPSSVLASQRHHRRHDSELE). Positions 101 to 113 (PSSDSPSLENSLS) are enriched in low complexity. Ser-141, Ser-145, Ser-149, Ser-150, Ser-163, and Ser-177 each carry phosphoserine. A glycosyltransferase region spans residues 173 to 652 (SRSLSFSMNG…AVTFQSLIKE (480 aa)). Thr-189 carries the phosphothreonine modification.

It in the N-terminal section; belongs to the glycosyltransferase 20 family.

The catalysed reaction is D-glucose 6-phosphate + UDP-alpha-D-glucose = alpha,alpha-trehalose 6-phosphate + UDP + H(+). The protein is Putative alpha,alpha-trehalose-phosphate synthase [UDP-forming] 106 kDa subunit of Schizosaccharomyces pombe (strain 972 / ATCC 24843) (Fission yeast).